Reading from the N-terminus, the 448-residue chain is Tryptophan dimethylallyltransferase 1 (448 aa).

L-tryptophan-binding positions include 80–81 (IL) and Glu-89. Substrate-binding residues include Arg-100, Lys-186, and Tyr-188. 2 residues coordinate L-tryptophan: Tyr-190 and Arg-249. 7 residues coordinate substrate: Arg-262, Lys-264, Tyr-266, Gln-348, Tyr-350, Tyr-414, and Tyr-418.

This sequence belongs to the tryptophan dimethylallyltransferase family. As to quaternary structure, homodimer.

It catalyses the reaction L-tryptophan + dimethylallyl diphosphate = 4-(3-methylbut-2-enyl)-L-tryptophan + diphosphate. The protein operates within alkaloid biosynthesis; ergot alkaloid biosynthesis. Tryptophan dimethylallyltransferase; part of the gene cluster that mediates the biosynthesis of fungal ergot alkaloid. DmaW catalyzes the first step of ergot alkaloid biosynthesis by condensing dimethylallyl diphosphate (DMAP) and tryptophan to form 4-dimethylallyl-L-tryptophan. The second step is catalyzed by the methyltransferase easF that methylates 4-dimethylallyl-L-tryptophan in the presence of S-adenosyl-L-methionine, resulting in the formation of 4-dimethylallyl-L-abrine. The catalase easC and the FAD-dependent oxidoreductase easE then transform 4-dimethylallyl-L-abrine to chanoclavine-I which is further oxidized by easD in the presence of NAD(+), resulting in the formation of chanoclavine-I aldehyde. Agroclavine dehydrogenase easG then mediates the conversion of chanoclavine-I aldehyde to agroclavine via a non-enzymatic adduct reaction: the substrate is an iminium intermediate that is formed spontaneously from chanoclavine-I aldehyde in the presence of glutathione. The presence of easA is not required to complete this reaction. Further conversion of agroclavine to paspalic acid is a two-step process involving oxidation of agroclavine to elymoclavine and of elymoclavine to paspalic acid, the second step being performed by the elymoclavine oxidase cloA. Paspalic acid is then further converted to D-lysergic acid. Ergopeptines are assembled from D-lysergic acid and three different amino acids by the D-lysergyl-peptide-synthetases composed each of a monomudular and a trimodular nonribosomal peptide synthetase subunit. LpsB and lpsC encode the monomodular subunits responsible for D-lysergic acid activation and incorporation into the ergopeptine backbone. LpsA1 and A2 subunits encode the trimodular nonribosomal peptide synthetase assembling the tripeptide portion of ergopeptines. LpsA1 is responsible for formation of the major ergopeptine, ergotamine, and lpsA2 for alpha-ergocryptine, the minor ergopeptine of the total alkaloid mixture elaborated by C.purpurea. D-lysergyl-tripeptides are assembled by the nonribosomal peptide synthetases and released as N-(D-lysergyl-aminoacyl)-lactams. Cyclolization of the D-lysergyl-tripeptides is performed by the Fe(2+)/2-ketoglutarate-dependent dioxygenase easH which introduces a hydroxyl group into N-(D-lysergyl-aminoacyl)-lactam at alpha-C of the aminoacyl residue followed by spontaneous condensation with the terminal lactam carbonyl group. The protein is Tryptophan dimethylallyltransferase 1 of Claviceps purpurea (strain 20.1) (Ergot fungus).